We begin with the raw amino-acid sequence, 23 residues long: Fimbrial protein (23 aa).

A disulfide bridge connects residues Cys-8 and Cys-21.

It belongs to the N-Me-Phe pilin family. The pili are polar flexible filaments of about 5.4 nanometers diameter and 2.5 micrometers average length; they consist of only a single polypeptide chain arranged in a helical configuration of five subunits per turn in the assembled pilus.

The protein localises to the fimbrium. In Pseudomonas aeruginosa, this protein is Fimbrial protein (pil).